Consider the following 122-residue polypeptide: Basic phospholipase A2 homolog Gln49-PLA2 (122 aa).

Cystine bridges form between cysteine 26-cysteine 115, cysteine 28-cysteine 44, cysteine 43-cysteine 95, cysteine 49-cysteine 122, cysteine 50-cysteine 88, cysteine 57-cysteine 81, and cysteine 75-cysteine 86.

It belongs to the phospholipase A2 family. Group II subfamily. Q49 sub-subfamily. Monomer. In terms of tissue distribution, expressed by the venom gland.

The protein resides in the secreted. Functionally, snake venom phospholipase A2 (PLA2) homolog that shows local myotoxicity, apparent anticoagulant activity, and neurotoxicity. Shows analgesic effect on mice due to a decrease of action potentials and nerve conduction velocity. These effects are caused by inhibition of voltage-gated ion channels (potassium (Kv) and sodium (Nav)). In addition, analgesic effects are antagonized by naloxone, implying the mechanism of action is correlated with opioid receptors (probably indirectly). Does not show detectable PLA2 activity on egg yolk phospholipids. In Gloydius ussuriensis (Ussuri mamushi), this protein is Basic phospholipase A2 homolog Gln49-PLA2.